A 301-amino-acid chain; its full sequence is GTPase Era (301 aa).

Positions lysine 4–proline 173 constitute an Era-type G domain. The tract at residues glycine 12–serine 19 is G1. Glycine 12 to serine 19 contacts GTP. The tract at residues asparagine 38–lysine 42 is G2. The tract at residues aspartate 64–glycine 67 is G3. GTP contacts are provided by residues aspartate 64–leucine 68 and serine 122–aspartate 125. The G4 stretch occupies residues serine 122–aspartate 125. Positions leucine 152–alanine 154 are G5. Positions leucine 204–lysine 280 constitute a KH type-2 domain.

It belongs to the TRAFAC class TrmE-Era-EngA-EngB-Septin-like GTPase superfamily. Era GTPase family. As to quaternary structure, monomer.

It is found in the cytoplasm. Its subcellular location is the cell inner membrane. An essential GTPase that binds both GDP and GTP, with rapid nucleotide exchange. Plays a role in 16S rRNA processing and 30S ribosomal subunit biogenesis and possibly also in cell cycle regulation and energy metabolism. This Helicobacter pylori (strain P12) protein is GTPase Era.